Reading from the N-terminus, the 535-residue chain is Cytochrome P450 monooxygenase claQ (535 aa).

Helical transmembrane passes span 7 to 27 (IGTW…KLVG) and 225 to 245 (YFAI…NLPT). Cysteine 472 serves as a coordination point for heme.

The protein belongs to the cytochrome P450 family. Heme serves as cofactor.

The protein resides in the membrane. Its pathway is secondary metabolite biosynthesis; terpenoid biosynthesis. Cytochrome P450 monooxygenase; part of the gene cluster that mediates the biosynthesis of clavilactone A, a meroterpenoid that features a unique benzo-fused ten-membered carbocyclic ring unit with an alpha,beta-epoxy-gamma-lactone moiety, forming an intriguing 10/5/3 tricyclic nested skeleton. Cytochrome P450 monooxygenases claO, claP, claQ, claU, and claW are close orthologs, suggesting that a redundant function or pseudogenes are present in the cla cluster. These monoxygenases are not involved in clavilactone A biosynthesis nor its modification. ClaR, ClaS and ClaT are sufficient to produce clavilactone A. The biosynthesis begins with the prenyltransferase claS that transfers geranyl pyrophosphate (GPP) to hydroquinone to produces geranylhydroquinone. The cytochrome P450 monooxygenase claR then catalyzes the diradical coupling reaction between the intramolecular hydroquinone and allyl moieties to form the benzo-fused ten-membered carbocyclic ring unit of wigantol. Finally the cytochrome P450 monooxygenase claT exquisitely and stereoselectively assembles the alpha,beta-epoxy-gamma-lactone moiety, producing clavilactone A via arnebinol A. This Ampulloclitocybe clavipes (Club foot) protein is Cytochrome P450 monooxygenase claQ.